A 398-amino-acid polypeptide reads, in one-letter code: MKRKICKALICATLATSLWAGASTKVYAWDGKIDGTGTHAMIVTQGVSILENDLSKNEPESVRKNLEILKENMHELQLGSTYPDYDKNAYDLYQDHFWDPDTDNNFSKDNSWYLAYSIPDTGESQIRKFSALARYEWQRGNYKQATFYLGEAMHYFGDIDTPYHPANVTAVDSAGHVKFETFAEERKEQYKINTAGCKTNEDFYADILKNKDFNAWSKEYARGFAKTGKSIYYSHASMSHSWDDWDYAAKVTLANSQKGTAGYIYRFLHDVSEGNDPSVGKNVKELVAYISTSGEKDAGTDDYMYFGIKTKDGKTQEWEMDNPGNDFMTGSKDTYTFKLKDENLKIDDIQNMWIRKRKYTAFPDAYKPENIKIIANGKVVVDKDINEWISGNSTYNIK.

Positions 1–28 are cleaved as a signal peptide; that stretch reads MKRKICKALICATLATSLWAGASTKVYA. 9 residues coordinate Zn(2+): W29, H39, D84, H96, H154, D158, H164, H176, and E180. Residues 29-278 form the Zn-dependent PLC domain; the sequence is WDGKIDGTGT…HDVSEGNDPS (250 aa). A linker region spans residues 275-283; that stretch reads NDPSVGKNV. A PLAT domain is found at 284–398; it reads KELVAYISTS…ISGNSTYNIK (115 aa). The Ca(2+) site is built by D297, G299, T300, D301, D321, N322, G324, N325, D326, D364, and A365.

This sequence belongs to the bacterial zinc-metallophospholipase C family. The cofactor is Ca(2+). Zn(2+) is required as a cofactor.

The protein localises to the secreted. It carries out the reaction a 1,2-diacyl-sn-glycero-3-phosphocholine + H2O = phosphocholine + a 1,2-diacyl-sn-glycerol + H(+). Bacterial hemolysins are exotoxins that attack blood cell membranes and cause cell rupture. Constitutes an essential virulence factor in gas gangrene. Binds to eukaryotic membranes where it hydrolyzes both phosphatidylcholine and sphingomyelin. The diacylglycerol produced can activate both the arachidonic acid pathway, leading to modulation of the inflammatory response cascade and thrombosis, and protein kinase C, leading to activation of eukaryotic phospholipases and further membrane damage. Acts on human and mouse erythrocytes, but not on rabbit or horse erythrocytes. The polypeptide is Phospholipase C (plc) (Clostridium perfringens (strain 13 / Type A)).